The following is a 737-amino-acid chain: NAD-dependent protein deacetylase sirtuin-1 (737 aa).

Residues Met1–Ala28 show a composition bias toward low complexity. 2 disordered regions span residues Met1 to Pro56 and Glu75 to Ala125. Ala2 is subject to N-acetylalanine. The interval Ala2 to Ala131 is interaction with CLOCK. The interaction with H1-4 stretch occupies residues Ala2–Arg268. Residues Ser14 and Ser25 each carry the phosphoserine modification. A Nuclear localization signal motif is present at residues Leu32–Asp39. Ser46 bears the Phosphoserine; by MAPK8 mark. 2 stretches are compositionally biased toward low complexity: residues Ser46–Pro56 and Glu75–Gly94. Positions Asp111–Ala123 are enriched in acidic residues. Residues Arg135–Pro533 form an interaction with CCAR2 region. The short motif at Leu138–Leu145 is the Nuclear export signal element. Phosphoserine occurs at positions 151, 154, 164, and 165. A disordered region spans residues Cys152–Arg171. The Nuclear localization signal signature appears at Pro223 to Lys230. The Deacetylase sirtuin-type domain occupies Lys228 to Glu488. Lys230 carries the post-translational modification N6-acetyllysine. The required for interaction with the sumoylated form of CCAR2 stretch occupies residues Ile248–Leu251. NAD(+)-binding positions include Gly253–Tyr272 and Gln337–Asp340. The active-site Proton acceptor is His355. Positions 363 and 366 each coordinate Zn(2+). Position 369 is an N6-acetyllysine (Lys369). Residues Cys387 and Cys390 each contribute to the Zn(2+) site. An S-nitrosocysteine mark is found at Cys387 and Cys390. Lys422 carries the post-translational modification N6-acetyllysine. The Nuclear export signal motif lies at Val425 to Ile431. NAD(+) is bound by residues Gly432–Ser434, Asn457–Glu459, and Cys474. Lys505 carries the post-translational modification N6-acetyllysine. The disordered stretch occupies residues Val514–Gln539. Thr522 carries the post-translational modification Phosphothreonine; by DYRK1A, DYRK3 and MAPK8. A Phosphoserine modification is found at Ser527. Residues Asp529 to Gln539 are compositionally biased toward polar residues. Thr536 carries the post-translational modification Phosphothreonine. Lys600 is subject to N6-acetyllysine. A phosphoserine; by CaMK2 mark is found at Ser649 and Ser651. Residues Asp653–Asp713 are disordered. Positions Leu656–Glu676 are enriched in low complexity. The segment covering Glu677–Glu697 has biased composition (acidic residues). Ser737 is modified (phosphoserine).

Belongs to the sirtuin family. Class I subfamily. As to quaternary structure, interacts with XBP1 isoform 2. Found in a complex with PCAF and MYOD1 Component of the eNoSC complex, composed of SIRT1, SUV39H1 and RRP8. Interacts with HES1, HEY2 and PML. Interacts with RPS19BP1/AROS. Interacts with CCAR2 (via N-terminus); the interaction disrupts the interaction between SIRT1 and p53/TP53. Interacts with SETD7; the interaction induces the dissociation of SIRT1 from p53/TP53 and increases p53/TP53 activity. Interacts with MYCN, NR1I2, CREBZF, TSC2, TLE1, FOS, JUN, NR0B2, PPARG, NCOR, IRS1, IRS2 and NMNAT1. Interacts with HNF1A; the interaction occurs under nutrient restriction. Interacts with SUZ12; the interaction mediates the association with the PRC4 histone methylation complex which is specific as an association with PCR2 and PCR3 complex variants is not found. Interacts with FOXO1; the interaction deacetylates FOXO1, enhances its DNA-binding ability and increases its transcriptional activity. Interacts with BCL6; leads to a epigenetic repression of specific target genes. Interacts with CLOCK, BMAL1 and PER2. Interacts with PPARA; the interaction seems to be modulated by NAD(+) levels. Interacts with NR1H3 and this interaction is inhibited in the presence of CCAR2. Interacts with CHEK2 and p53/TP53. Exhibits a preferential interaction with sumoylated CCAR2 over its unmodified form. Interacts with PACS2. Interacts with SIRT7. Interacts with PUS7. Interacts with TULP3. Interacts with MORN3; the interaction enhances the ubiquitination of p53/TP53. Zn(2+) is required as a cofactor. Methylated on multiple lysine residues; methylation is enhanced after DNA damage and is dispensable for deacetylase activity toward p53/TP53. Post-translationally, phosphorylated. Phosphorylated by STK4/MST1, resulting in inhibition of SIRT1-mediated p53/TP53 deacetylation. Phosphorylation by MAPK8/JNK1 at Ser-46 and Thr-522 leads to increased nuclear localization and enzymatic activity. Phosphorylation at Thr-522 by DYRK1A and DYRK3 activates deacetylase activity and promotes cell survival. Phosphorylation by mammalian target of rapamycin complex 1 (mTORC1) at Ser-46 inhibits deacetylation activity. Phosphorylated by CaMK2, leading to increased p53/TP53 and NF-kappa-B p65/RELA deacetylation activity. In terms of processing, proteolytically cleaved by cathepsin B upon TNF-alpha treatment to yield catalytic inactive but stable SirtT1 75 kDa fragment (75SirT1). S-nitrosylated by GAPDH, leading to inhibit the NAD-dependent protein deacetylase activity. Post-translationally, acetylated at various Lys residues. Deacetylated via an autocatalytic mechanism. Autodeacetylation at Lys-230 promotes its protein deacetylase activity. In terms of processing, ubiquitinated; leading to degradation. Deubiquitinated by USP22; leading to stabilization. Widely expressed. Weakly expressed in liver and skeletal muscle.

The protein localises to the nucleus. Its subcellular location is the PML body. It is found in the cytoplasm. It localises to the mitochondrion. The catalysed reaction is N(6)-acetyl-L-lysyl-[protein] + NAD(+) + H2O = 2''-O-acetyl-ADP-D-ribose + nicotinamide + L-lysyl-[protein]. The enzyme catalyses N(6)-propanoyl-L-lysyl-[protein] + NAD(+) + H2O = 3''-O-propanoyl-ADP-D-ribose + nicotinamide + L-lysyl-[protein]. It carries out the reaction N(6)-(2E)-butenoyl-L-lysyl-[protein] + NAD(+) + H2O = 2''-O-(2E)-but-2-enoyl-ADP-D-ribose + nicotinamide + L-lysyl-[protein]. It catalyses the reaction N(6)-[(S)-lactoyl]-L-lysyl-[protein] + NAD(+) + H2O = 2''-O-(S)-lactoyl-ADP-D-ribose + nicotinamide + L-lysyl-[protein]. Activated by resveratrol (3,5,4'-trihydroxy-trans-stilbene), butein (3,4,2',4'-tetrahydroxychalcone), piceatannol (3,5,3',4'-tetrahydroxy-trans-stilbene), Isoliquiritigenin (4,2',4'-trihydroxychalcone), fisetin (3,7,3',4'-tetrahydroxyflavone) and quercetin (3,5,7,3',4'-pentahydroxyflavone). MAPK8/JNK1 and RPS19BP1/AROS act as positive regulators of deacetylation activity. Inhibited by nicotinamide. Negatively regulated by CCAR2. NAD-dependent protein deacetylase that links transcriptional regulation directly to intracellular energetics and participates in the coordination of several separated cellular functions such as cell cycle, response to DNA damage, metabolism, apoptosis and autophagy. Can modulate chromatin function through deacetylation of histones and can promote alterations in the methylation of histones and DNA, leading to transcriptional repression. Deacetylates a broad range of transcription factors and coregulators, thereby regulating target gene expression positively and negatively. Serves as a sensor of the cytosolic ratio of NAD(+)/NADH which is altered by glucose deprivation and metabolic changes associated with caloric restriction. Is essential in skeletal muscle cell differentiation and in response to low nutrients mediates the inhibitory effect on skeletal myoblast differentiation which also involves 5'-AMP-activated protein kinase (AMPK) and nicotinamide phosphoribosyltransferase (NAMPT). Component of the eNoSC (energy-dependent nucleolar silencing) complex, a complex that mediates silencing of rDNA in response to intracellular energy status and acts by recruiting histone-modifying enzymes. The eNoSC complex is able to sense the energy status of cell: upon glucose starvation, elevation of NAD(+)/NADP(+) ratio activates SIRT1, leading to histone H3 deacetylation followed by dimethylation of H3 at 'Lys-9' (H3K9me2) by SUV39H1 and the formation of silent chromatin in the rDNA locus. Deacetylates 'Lys-266' of SUV39H1, leading to its activation. Inhibits skeletal muscle differentiation by deacetylating PCAF and MYOD1. Deacetylates H2A and 'Lys-26' of H1-4. Deacetylates 'Lys-16' of histone H4 (in vitro). Involved in NR0B2/SHP corepression function through chromatin remodeling: Recruited to LRH1 target gene promoters by NR0B2/SHP thereby stimulating histone H3 and H4 deacetylation leading to transcriptional repression. Proposed to contribute to genomic integrity via positive regulation of telomere length; however, reports on localization to pericentromeric heterochromatin are conflicting. Proposed to play a role in constitutive heterochromatin (CH) formation and/or maintenance through regulation of the available pool of nuclear SUV39H1. Upon oxidative/metabolic stress decreases SUV39H1 degradation by inhibiting SUV39H1 polyubiquitination by MDM2. This increase in SUV39H1 levels enhances SUV39H1 turnover in CH, which in turn seems to accelerate renewal of the heterochromatin which correlates with greater genomic integrity during stress response. Deacetylates 'Lys-382' of p53/TP53 and impairs its ability to induce transcription-dependent proapoptotic program and modulate cell senescence. Deacetylates TAF1B and thereby represses rDNA transcription by the RNA polymerase I. Deacetylates MYC, promotes the association of MYC with MAX and decreases MYC stability leading to compromised transformational capability. Deacetylates FOXO3 in response to oxidative stress thereby increasing its ability to induce cell cycle arrest and resistance to oxidative stress but inhibiting FOXO3-mediated induction of apoptosis transcriptional activity; also leading to FOXO3 ubiquitination and protesomal degradation. Appears to have a similar effect on MLLT7/FOXO4 in regulation of transcriptional activity and apoptosis. Deacetylates DNMT1; thereby impairs DNMT1 methyltransferase-independent transcription repressor activity, modulates DNMT1 cell cycle regulatory function and DNMT1-mediated gene silencing. Deacetylates RELA/NF-kappa-B p65 thereby inhibiting its transactivating potential and augments apoptosis in response to TNF-alpha. Deacetylates HIF1A, KAT5/TIP60, RB1 and HIC1. Deacetylates FOXO1, which increases its DNA binding ability and enhances its transcriptional activity leading to increased gluconeogenesis in liver. Inhibits E2F1 transcriptional activity and apoptotic function, possibly by deacetylation. Involved in HES1- and HEY2-mediated transcriptional repression. In cooperation with MYCN seems to be involved in transcriptional repression of DUSP6/MAPK3 leading to MYCN stabilization by phosphorylation at 'Ser-62'. Deacetylates MEF2D. Required for antagonist-mediated transcription suppression of AR-dependent genes which may be linked to local deacetylation of histone H3. Represses HNF1A-mediated transcription. Required for the repression of ESRRG by CREBZF. Deacetylates NR1H3 and NR1H2 and deacetylation of NR1H3 at 'Lys-434' positively regulates transcription of NR1H3:RXR target genes, promotes NR1H3 proteasomal degradation and results in cholesterol efflux; a promoter clearing mechanism after reach round of transcription is proposed. Involved in lipid metabolism: deacetylates LPIN1, thereby inhibiting diacylglycerol synthesis. Implicated in regulation of adipogenesis and fat mobilization in white adipocytes by repression of PPARG which probably involves association with NCOR1 and SMRT/NCOR2. Deacetylates p300/EP300 and PRMT1. Deacetylates ACSS2 leading to its activation, and HMGCS1 deacetylation. Involved in liver and muscle metabolism. Through deacetylation and activation of PPARGC1A is required to activate fatty acid oxidation in skeletal muscle under low-glucose conditions and is involved in glucose homeostasis. Involved in regulation of PPARA and fatty acid beta-oxidation in liver. Involved in positive regulation of insulin secretion in pancreatic beta cells in response to glucose; the function seems to imply transcriptional repression of UCP2. Proposed to deacetylate IRS2 thereby facilitating its insulin-induced tyrosine phosphorylation. Deacetylates SREBF1 isoform SREBP-1C thereby decreasing its stability and transactivation in lipogenic gene expression. Involved in DNA damage response by repressing genes which are involved in DNA repair, such as XPC and TP73, deacetylating XRCC6/Ku70, and facilitating recruitment of additional factors to sites of damaged DNA, such as SIRT1-deacetylated NBN can recruit ATM to initiate DNA repair and SIRT1-deacetylated XPA interacts with RPA2. Also involved in DNA repair of DNA double-strand breaks by homologous recombination and specifically single-strand annealing independently of XRCC6/Ku70 and NBN. Promotes DNA double-strand breaks by mediating deacetylation of SIRT6. Transcriptional suppression of XPC probably involves an E2F4:RBL2 suppressor complex and protein kinase B (AKT) signaling. Transcriptional suppression of TP73 probably involves E2F4 and PCAF. Deacetylates WRN thereby regulating its helicase and exonuclease activities and regulates WRN nuclear translocation in response to DNA damage. Deacetylates APEX1 at 'Lys-6' and 'Lys-7' and stimulates cellular AP endonuclease activity by promoting the association of APEX1 to XRCC1. Catalyzes deacetylation of ERCC4/XPF, thereby impairing interaction with ERCC1 and nucleotide excision repair (NER). Increases p53/TP53-mediated transcription-independent apoptosis by blocking nuclear translocation of cytoplasmic p53/TP53 and probably redirecting it to mitochondria. Deacetylates XRCC6/Ku70 at 'Lys-537' and 'Lys-540' causing it to sequester BAX away from mitochondria thereby inhibiting stress-induced apoptosis. Is involved in autophagy, presumably by deacetylating ATG5, ATG7 and MAP1LC3B/ATG8. Deacetylates AKT1 which leads to enhanced binding of AKT1 and PDK1 to PIP3 and promotes their activation. Proposed to play role in regulation of STK11/LBK1-dependent AMPK signaling pathways implicated in cellular senescence which seems to involve the regulation of the acetylation status of STK11/LBK1. Can deacetylate STK11/LBK1 and thereby increase its activity, cytoplasmic localization and association with STRAD; however, the relevance of such activity in normal cells is unclear. In endothelial cells is shown to inhibit STK11/LBK1 activity and to promote its degradation. Deacetylates SMAD7 at 'Lys-64' and 'Lys-70' thereby promoting its degradation. Deacetylates CIITA and augments its MHC class II transactivation and contributes to its stability. Deacetylates MECOM/EVI1. Deacetylates PML at 'Lys-487' and this deacetylation promotes PML control of PER2 nuclear localization. During the neurogenic transition, represses selective NOTCH1-target genes through histone deacetylation in a BCL6-dependent manner and leading to neuronal differentiation. Regulates the circadian expression of several core clock genes, including BMAL1, RORC, PER2 and CRY1 and plays a critical role in maintaining a controlled rhythmicity in histone acetylation, thereby contributing to circadian chromatin remodeling. Deacetylates BMAL1 and histones at the circadian gene promoters in order to facilitate repression by inhibitory components of the circadian oscillator. Deacetylates PER2, facilitating its ubiquitination and degradation by the proteasome. Protects cardiomyocytes against palmitate-induced apoptosis. Deacetylates XBP1 isoform 2; deacetylation decreases protein stability of XBP1 isoform 2 and inhibits its transcriptional activity. Deacetylates PCK1 and directs its activity toward phosphoenolpyruvate production promoting gluconeogenesis. Involved in the CCAR2-mediated regulation of PCK1 and NR1D1. Deacetylates CTNB1 at 'Lys-49'. In POMC (pro-opiomelanocortin) neurons, required for leptin-induced activation of PI3K signaling. Deacetylates SOX9; promoting SOX9 nuclear localization and transactivation activity. Involved in the regulation of centrosome duplication: Deacetylates CENATAC in G1 phase, allowing for SASS6 accumulation on the centrosome and subsequent procentriole assembly. Deacetylates NDC80/HEC1. In addition to protein deacetylase activity, also acts as a protein-lysine deacylase by mediating protein delactylation, depropionylation and decrotonylation. Mediates depropionylation of Osterix (SP7). Catalyzes decrotonylation of histones; it however does not represent a major histone decrotonylase. Mediates protein delactylation of TEAD1 and YAP1. Functionally, deacetylates 'Lys-382' of p53/TP53, however with lower activity than isoform 1. In combination, the two isoforms exert an additive effect. Isoform 2 regulates p53/TP53 expression and cellular stress response and is in turn repressed by p53/TP53 presenting a SIRT1 isoform-dependent auto-regulatory loop. In terms of biological role, catalytically inactive 75SirT1 may be involved in regulation of apoptosis. May be involved in protecting chondrocytes from apoptotic death by associating with cytochrome C and interfering with apoptosome assembly. This chain is NAD-dependent protein deacetylase sirtuin-1 (Sirt1), found in Mus musculus (Mouse).